The following is a 285-amino-acid chain: 1,4-dihydroxy-2-naphthoyl-CoA synthase (285 aa).

Residues arginine 45, 84 to 88 (SGGDQ), tyrosine 97, 129 to 133 (YAIGG), threonine 155, serine 161, tyrosine 258, and lysine 273 each bind substrate. 154-156 (QTG) contacts hydrogencarbonate.

This sequence belongs to the enoyl-CoA hydratase/isomerase family. MenB subfamily. Requires hydrogencarbonate as cofactor.

The enzyme catalyses 2-succinylbenzoyl-CoA + H(+) = 1,4-dihydroxy-2-naphthoyl-CoA + H2O. The protein operates within quinol/quinone metabolism; 1,4-dihydroxy-2-naphthoate biosynthesis; 1,4-dihydroxy-2-naphthoate from chorismate: step 6/7. It functions in the pathway quinol/quinone metabolism; menaquinone biosynthesis. Functionally, converts o-succinylbenzoyl-CoA (OSB-CoA) to 1,4-dihydroxy-2-naphthoyl-CoA (DHNA-CoA). The sequence is that of 1,4-dihydroxy-2-naphthoyl-CoA synthase from Haemophilus influenzae (strain ATCC 51907 / DSM 11121 / KW20 / Rd).